We begin with the raw amino-acid sequence, 459 residues long: Cysteine--tRNA ligase (459 aa).

Cys-28 lines the Zn(2+) pocket. Residues 30 to 40 carry the 'HIGH' region motif; sequence MTVYDFCHLGH. Zn(2+)-binding residues include Cys-209, His-234, and Glu-238. Residues 266–270 carry the 'KMSKS' region motif; the sequence is KMAKS. Residue Lys-269 participates in ATP binding. The interval 440-459 is disordered; the sequence is QARGIELEDTPEGTKWRRTR.

This sequence belongs to the class-I aminoacyl-tRNA synthetase family. As to quaternary structure, monomer. The cofactor is Zn(2+).

The protein resides in the cytoplasm. The catalysed reaction is tRNA(Cys) + L-cysteine + ATP = L-cysteinyl-tRNA(Cys) + AMP + diphosphate. The sequence is that of Cysteine--tRNA ligase from Halorhodospira halophila (strain DSM 244 / SL1) (Ectothiorhodospira halophila (strain DSM 244 / SL1)).